Consider the following 172-residue polypeptide: Large ribosomal subunit protein uL10 (172 aa).

The protein belongs to the universal ribosomal protein uL10 family. As to quaternary structure, part of the ribosomal stalk of the 50S ribosomal subunit. The N-terminus interacts with L11 and the large rRNA to form the base of the stalk. The C-terminus forms an elongated spine to which L12 dimers bind in a sequential fashion forming a multimeric L10(L12)X complex.

Functionally, forms part of the ribosomal stalk, playing a central role in the interaction of the ribosome with GTP-bound translation factors. The chain is Large ribosomal subunit protein uL10 from Francisella tularensis subsp. mediasiatica (strain FSC147).